We begin with the raw amino-acid sequence, 113 residues long: U11-theraphotoxin-Hhn1m (113 aa).

An N-terminal signal peptide occupies residues 1–21 (MNTVRGTFLLVFGLAASLGQA). Residues 22 to 74 (DKNENRREMQKKTEQGKSYLNFAENLLLQKLEELEAKLLEKHSKKSKNSRQKR) constitute a propeptide that is removed on maturation. 3 disulfides stabilise this stretch: Cys-75-Cys-90, Cys-82-Cys-95, and Cys-89-Cys-110.

The protein belongs to the neurotoxin 14 (magi-1) family. 01 (HNTX-16) subfamily. As to expression, expressed by the venom gland.

Its subcellular location is the secreted. In terms of biological role, probable ion channel inhibitor. This chain is U11-theraphotoxin-Hhn1m, found in Cyriopagopus hainanus (Chinese bird spider).